The following is a 472-amino-acid chain: MSAAKLNVKTSAKPNSRIAVEVEVPANRCKNSYDEALSKLSRSISIPGFRKGKVPKTVVIQQLGVKRIQASALESLLQKVWTETLDQEGIEPLCEPELEDGFETILENFNPEKTLILKLETDITPIPTLKKSSGLTAEVENLIFDPKKVDELIEQSRAQLATKVPVSDRAAQKGDIALVSFKGSFSDDGSEIEGGSADSIEIELEQGRMIPGFIEGVIGMNINDEKTLKCEFPKDYHQEEAKGRKAEFNVSLEDLKIKELPELNDEFAKQASDKENMSDLRADLEKRLKEDNDRKQAKTRQDSLLDVLVKELEVDLPKSLIDQEVRTIVEQTAQNFAQQGIDVKSMFTPELVKSLMESSKGEAEKKLRQKFALQALAKSEKIEVSDKEINSKLEQVEADIKLSNEKNIDAERLKEAITDDLLQEKLFAWLEENNTVVEKTPEKARDQIKEKSSKKKTTKTNKEKKSSKTPKS.

The PPIase FKBP-type domain maps to 174 to 261; sequence GDIALVSFKG…LEDLKIKELP (88 aa). Residues 438 to 472 form a disordered region; the sequence is EKTPEKARDQIKEKSSKKKTTKTNKEKKSSKTPKS. A compositionally biased stretch (basic and acidic residues) spans 439 to 451; that stretch reads KTPEKARDQIKEK.

The protein belongs to the FKBP-type PPIase family. Tig subfamily.

The protein resides in the cytoplasm. The catalysed reaction is [protein]-peptidylproline (omega=180) = [protein]-peptidylproline (omega=0). Functionally, involved in protein export. Acts as a chaperone by maintaining the newly synthesized protein in an open conformation. Functions as a peptidyl-prolyl cis-trans isomerase. The chain is Trigger factor from Prochlorococcus marinus (strain NATL2A).